A 428-amino-acid chain; its full sequence is Adenylosuccinate synthetase (428 aa).

Residues 12 to 18 and 40 to 42 contribute to the GTP site; these read GDEGKGK and GHT. Catalysis depends on aspartate 13, which acts as the Proton acceptor. Residues aspartate 13 and glycine 40 each coordinate Mg(2+). IMP-binding positions include 13–16, 38–41, threonine 130, arginine 144, glutamine 224, threonine 239, and arginine 303; these read DEGK and NAGH. Catalysis depends on histidine 41, which acts as the Proton donor. 299–305 serves as a coordination point for substrate; that stretch reads VTTGRSR. GTP is bound by residues arginine 305, 331–333, and 413–415; these read KID and GVG.

The protein belongs to the adenylosuccinate synthetase family. In terms of assembly, homodimer. Mg(2+) serves as cofactor.

Its subcellular location is the cytoplasm. The catalysed reaction is IMP + L-aspartate + GTP = N(6)-(1,2-dicarboxyethyl)-AMP + GDP + phosphate + 2 H(+). Its pathway is purine metabolism; AMP biosynthesis via de novo pathway; AMP from IMP: step 1/2. Plays an important role in the de novo pathway of purine nucleotide biosynthesis. Catalyzes the first committed step in the biosynthesis of AMP from IMP. The polypeptide is Adenylosuccinate synthetase (Clostridium perfringens (strain 13 / Type A)).